A 451-amino-acid polypeptide reads, in one-letter code: AAA-ATPase At3g50940 (451 aa).

Positions 1–25 are cleaved as a signal peptide; sequence MSSSSESHLATAKTALTAVASVAAA. Residue 254–261 coordinates ATP; sequence GPPGTGKS.

The protein belongs to the AAA ATPase family. BCS1 subfamily. Mg(2+) serves as cofactor.

The enzyme catalyses ATP + H2O = ADP + phosphate + H(+). In Arabidopsis thaliana (Mouse-ear cress), this protein is AAA-ATPase At3g50940.